Here is a 157-residue protein sequence, read N- to C-terminus: Protein Smg (157 aa).

The protein belongs to the Smg family.

In Buchnera aphidicola subsp. Acyrthosiphon pisum (strain 5A), this protein is Protein Smg.